Here is a 463-residue protein sequence, read N- to C-terminus: Aromatic amino acid transport protein AroP (463 aa).

A run of 12 helical transmembrane segments spans residues 18–38 (TMMGLGSAIGAGLFLGTGVGI), 40–60 (AAGPAVLLAYIIAGAIVVLVM), 84–104 (FGHWAGFSLGWLYWFMLIMVM), 117–137 (AWFGVEPWIPSLVCVVFFAVV), 157–177 (VAVIIAFLIIGIALIFGWLPG), 200–220 (VAAGLLAVAFAFGGIEIVTIA), 237–257 (AVIWRISVFYLGSVLVITFLM), 276–296 (ILAMANIPGTVGFMEAIIVLA), 337–357 (AVLLSMFFAFVSVGLQYWNPA), 358–378 (GLLDFLLNAVGGCLIVVWAMI), 402–422 (AHPWLGILTLVLLAGLVALML), and 431–451 (VYSVAIVYGFLVLLSFVTVNS).

Belongs to the amino acid-polyamine-organocation (APC) superfamily. Amino acid transporter (AAT) (TC 2.A.3.1) family.

The protein resides in the cell membrane. The enzyme catalyses L-phenylalanine(in) + H(+)(in) = L-phenylalanine(out) + H(+)(out). It carries out the reaction L-tryptophan(in) + H(+)(in) = L-tryptophan(out) + H(+)(out). The catalysed reaction is L-tyrosine(in) + H(+)(in) = L-tyrosine(out) + H(+)(out). Its function is as follows. Permease that is involved in the active transport across the cytoplasmic membrane of all three aromatic amino acids, phenylalanine, tyrosine and tryptophan. This chain is Aromatic amino acid transport protein AroP, found in Corynebacterium glutamicum (strain ATCC 13032 / DSM 20300 / JCM 1318 / BCRC 11384 / CCUG 27702 / LMG 3730 / NBRC 12168 / NCIMB 10025 / NRRL B-2784 / 534).